Consider the following 623-residue polypeptide: Leucine-rich repeat, immunoglobulin-like domain and transmembrane domain-containing protein 1 (623 aa).

The N-terminal stretch at 1–21 (MWVALGMLWLLALGGPHQAWS) is a signal peptide. In terms of domain architecture, LRRNT spans 22-59 (FCPSQCSCSLHILSDGSKARTVVCSDPDLTLPPASIPP). Residues 22–526 (FCPSQCSCSL…EVVDAEGTQR (505 aa)) lie on the Lumenal side of the membrane. LRR repeat units follow at residues 60–81 (DTCK…TFRP), 84–105 (RLEQ…MLRG), 108–128 (RLRE…AALK), 132–153 (QLQL…AVHF), and 156–177 (NLTF…LLDT). Asn-156 is a glycosylation site (N-linked (GlcNAc...) asparagine). An LRRCT domain is found at 201–253 (NPWVCDCRLYDLVHLLDGWASNLIFIEARLRCGSPRSLAGVAFSQLELRKCQS). The Ig-like C2-type domain occupies 266 to 332 (PLGSTVLLRC…SGDYICQAKN (67 aa)). Cysteines 275 and 328 form a disulfide. N-linked (GlcNAc...) asparagine glycosylation is found at Asn-296 and Asn-455. Positions 430–518 (MVRSLKVVGD…QCVIFSTDEV (89 aa)) constitute a Fibronectin type-III domain. The stretch at 525–548 (QRLINMVVISVAAIIALPPTLLVC) is one LRR 6 repeat. The helical transmembrane segment at 527-547 (LINMVVISVAAIIALPPTLLV) threads the bilayer. The Cytoplasmic segment spans residues 548–623 (CCGALRRRCH…GGRRINEYFC (76 aa)).

Homodimer. Interacts with LRIT2; may form a heterodimer with LRIT2. Interacts (via its N-terminal extracellular domain) with metabotropic glutamate receptor GRM6. Interacts (via its extreme C-terminus) with the scaffold protein FRMPD2 (via the third PDZ domain); the interaction leads to their colocalization in photoreceptor synapses. Retina, outer segments of photoreceptor cells.

The protein localises to the endoplasmic reticulum membrane. It is found in the cell projection. It localises to the dendrite. Photoreceptor synaptic protein essential for normal vision. Involved in synapse formation in cone photoreceptor cells. In Rattus norvegicus (Rat), this protein is Leucine-rich repeat, immunoglobulin-like domain and transmembrane domain-containing protein 1 (Lrit1).